A 142-amino-acid polypeptide reads, in one-letter code: ATP synthase epsilon chain (142 aa).

It belongs to the ATPase epsilon chain family. In terms of assembly, F-type ATPases have 2 components, CF(1) - the catalytic core - and CF(0) - the membrane proton channel. CF(1) has five subunits: alpha(3), beta(3), gamma(1), delta(1), epsilon(1). CF(0) has three main subunits: a, b and c.

It localises to the cell inner membrane. Produces ATP from ADP in the presence of a proton gradient across the membrane. The polypeptide is ATP synthase epsilon chain (Shewanella sediminis (strain HAW-EB3)).